Reading from the N-terminus, the 83-residue chain is Small ribosomal subunit protein bS18 (83 aa).

It belongs to the bacterial ribosomal protein bS18 family. In terms of assembly, part of the 30S ribosomal subunit. Forms a tight heterodimer with protein bS6.

In terms of biological role, binds as a heterodimer with protein bS6 to the central domain of the 16S rRNA, where it helps stabilize the platform of the 30S subunit. This is Small ribosomal subunit protein bS18 from Methylobacterium radiotolerans (strain ATCC 27329 / DSM 1819 / JCM 2831 / NBRC 15690 / NCIMB 10815 / 0-1).